The following is a 444-amino-acid chain: Phosphoglucosamine mutase (444 aa).

Ser-104 acts as the Phosphoserine intermediate in catalysis. 4 residues coordinate Mg(2+): Ser-104, Asp-243, Asp-245, and Asp-247. At Ser-104 the chain carries Phosphoserine.

Belongs to the phosphohexose mutase family. The cofactor is Mg(2+). Post-translationally, activated by phosphorylation.

It catalyses the reaction alpha-D-glucosamine 1-phosphate = D-glucosamine 6-phosphate. Catalyzes the conversion of glucosamine-6-phosphate to glucosamine-1-phosphate. The polypeptide is Phosphoglucosamine mutase (Neisseria meningitidis serogroup B (strain ATCC BAA-335 / MC58)).